A 132-amino-acid chain; its full sequence is Agouti-signaling protein (132 aa).

Positions 1–22 (MDVTRLLLATLLVFLCFFTAYS) are cleaved as a signal peptide. N-linked (GlcNAc...) asparagine glycosylation is present at N39. Basic and acidic residues predominate over residues 61–79 (EISRKEAEKKRSSKKEASM). A disordered region spans residues 61–87 (EISRKEAEKKRSSKKEASMKKVARPRT). Intrachain disulfides connect C93/C108, C100/C114, C107/C125, C111/C132, and C116/C123. The 40-residue stretch at 93-132 (CVATRDSCKPPAPACCDPCASCQCRFFRSACSCRVLSLNC) folds into the Agouti domain.

Its subcellular location is the secreted. Functionally, involved in the regulation of melanogenesis. The binding of ASP to MC1R precludes alpha-MSH initiated signaling and thus blocks production of cAMP, leading to a down-regulation of eumelanogenesis (brown/black pigment) and thus increasing synthesis of pheomelanin (yellow/red pigment). The polypeptide is Agouti-signaling protein (ASIP) (Macaca fascicularis (Crab-eating macaque)).